We begin with the raw amino-acid sequence, 393 residues long: Protein TsgA (393 aa).

12 helical membrane-spanning segments follow: residues 11-31 (WISFLSYALTGALVIVTGMVM), 51-71 (FLNAGILISIFLNAWLMEIIP), 78-98 (FGFILMVLAVAGLMFSHSLAL), 101-121 (AAMFVLGLVSGITMSIGTFLI), 134-154 (LLFTDSFFSMAGMIFPMVAAF), 162-182 (WYWVYACIGLVYLAIFILTFG), 206-226 (IGVLFLAVAALCYILGQLGFI), 245-265 (ALVSDFWMSYMFGMWAFSFIL), 273-293 (ILTVLAGMAAVLMYLFITGTQ), 298-318 (WFILTLGFFSSAIYTSIITLG), 332-352 (FILTCGTIGTMLTFVVTGPIV), and 361-381 (LLTANGLYAVVFVMCFALGFV).

It belongs to the major facilitator superfamily. TsgA family.

The protein resides in the cell inner membrane. The protein is Protein TsgA of Salmonella paratyphi B (strain ATCC BAA-1250 / SPB7).